We begin with the raw amino-acid sequence, 315 residues long: DNA-directed RNA polymerase subunit alpha (315 aa).

Residues 1-228 form an alpha N-terminal domain (alpha-NTD) region; sequence MAQFQIECVE…DLFNPLKDIS (228 aa). The tract at residues 243–315 is alpha C-terminal domain (alpha-CTD); that stretch reads TAQIPIEELQ…LPQERSSKHN (73 aa).

This sequence belongs to the RNA polymerase alpha chain family. As to quaternary structure, homodimer. In cyanobacteria the RNAP catalytic core is composed of 2 alpha, 1 beta, 1 beta', 1 gamma and 1 omega subunit. When a sigma factor is associated with the core the holoenzyme is formed, which can initiate transcription.

The catalysed reaction is RNA(n) + a ribonucleoside 5'-triphosphate = RNA(n+1) + diphosphate. Its function is as follows. DNA-dependent RNA polymerase catalyzes the transcription of DNA into RNA using the four ribonucleoside triphosphates as substrates. The chain is DNA-directed RNA polymerase subunit alpha from Nostoc sp. (strain PCC 7120 / SAG 25.82 / UTEX 2576).